The primary structure comprises 325 residues: NADH-quinone oxidoreductase subunit H (325 aa).

8 consecutive transmembrane segments (helical) span residues I11–F31, F81–V101, I114–G134, V154–F174, M186–V206, F237–F257, L265–I285, and I304–A324.

This sequence belongs to the complex I subunit 1 family. As to quaternary structure, NDH-1 is composed of 13 different subunits. Subunits NuoA, H, J, K, L, M, N constitute the membrane sector of the complex.

Its subcellular location is the cell inner membrane. The enzyme catalyses a quinone + NADH + 5 H(+)(in) = a quinol + NAD(+) + 4 H(+)(out). Its function is as follows. NDH-1 shuttles electrons from NADH, via FMN and iron-sulfur (Fe-S) centers, to quinones in the respiratory chain. The immediate electron acceptor for the enzyme in this species is believed to be ubiquinone. Couples the redox reaction to proton translocation (for every two electrons transferred, four hydrogen ions are translocated across the cytoplasmic membrane), and thus conserves the redox energy in a proton gradient. This subunit may bind ubiquinone. The chain is NADH-quinone oxidoreductase subunit H from Proteus mirabilis (strain HI4320).